A 481-amino-acid chain; its full sequence is MSIFNMITSYAGSQLLPFYIAIFVFTLVPWAIRFSWLELRKGSVVPLANPPDSLFGTGKTRRSFVKLSREILAKARSLFPNEPFRLITDWDFADEIRNDPRLSFSKAAMQDNHAGIPGFETVALVGREDQLIQKVARKQLTKHLYIIARISSRIYLGDQLCRNEAWLKITKTYTTNFYTASTNLRMFPRSIRPLAHWFLPECRKLRQERKDAIGIITPLIERRRELRRAAIAAGQPLPVFHDAIDWSEQEAEAAGTGASFDPVIFQLTLSLLAIHTTYDLLQQTMIDLGRHPEYIEPLRQEVVQLLREEGWKKTTLFKMKLLDSAIKESQRMKPGSIVTMRRYVTEDITLSSGLTLKKGTRLNVDNRRLDDPKIYDNPEVYNPYRFYDMRSEAGKDHGAQLVSTGSNHMGFGHGQHSCPGRFFAANEIKVALCHILVKYDWKLCPDTETKPDTRGMIAKSSPVTDILIKRRESVELDLEAI.

A helical membrane pass occupies residues 12 to 32; it reads GSQLLPFYIAIFVFTLVPWAI. Cys418 is a binding site for heme.

Belongs to the cytochrome P450 family. Heme serves as cofactor.

The protein resides in the membrane. It functions in the pathway plant hormone biosynthesis; gibberellin biosynthesis. Gibberellin 20-oxidase; part of the gene cluster that mediates the biosynthesis of gibberellins (GAs), diterpenoids that may provide a selective advantage during infection of the preferred host plant, rice. Gibberellins (GAs) are diterpenoids and are synthesized via the mevalonate pathway. Biosynthesis of the major metabolite GA3 (gibberellic acid) from geranylgeranyl diphosphate (GGPP) requires 13 steps. The GGPP produced by the geranylgeranyl diphosphate synthase GGS2 is converted to ent-kaurene via ent-copalyldiphosphate in a two-step cyclization reaction performed by the bifunctional ent-copalyl diphosphate synthase/ent-kaurene synthase enzyme (CPS/KS). Ent-Kaurene is metabolized to GAs by a series of oxidation reactions catalyzed by cytochrome P450 monooxygenases. Cytochrome P450 monooxygenase P450-4 is an ent-kaurene oxidase that catalyzes the three oxidation steps between ent-kaurene and ent-kaurenoic acid. The highly multifunctional cytochrome P450 monooxygenase P450-1 then catalyzes four steps involving oxidation at two carbon atoms, in the main pathway from ent-kaurenoic acid to GA14 via GA12-aldehyde as well as producing kaurenolides and fujenoic acids as by-products. The cytochrome P450 monooxygenase P450-2 then converts GA14 to GA4 by removal of C-20. GA4 is further converted to GA7 by the GA4 desaturase DES via 1,2-desaturation before cytochrome P450 monooxygenase P450-3, a 13-hydroxylase, hydroxylates GA7 to GA3, the final product of the GA-biosynthetic pathway. This Gibberella fujikuroi (strain CBS 195.34 / IMI 58289 / NRRL A-6831) (Bakanae and foot rot disease fungus) protein is Cytochrome P450 monooygenase 2.